The primary structure comprises 329 residues: MTPYIIETILKVLVVVAIFSALAGFLTYVERKVLAFMQRRLGPMHVGPYGVLQILADGIKLFTKEDIVPVGANQTIFKIAPVISAATAFIAMSAVPFFPEFELFGHTVRPIIADINVGILFVLGVGAVGMYGPLLAGMSSGNKWSLLGAARATVQLLSFEVVSGLSILAPLMMVGSLSLIEINNYQSGGIFDWLVWSQPLAFLLFLIAGYAELNRTPFDLLEHEAEIVAGFATEYSGMRWGMFFIGEYANMITLAFLVVLLFFGGFNPLWFIPGGIAILLKVAVFLFLFLWVRAAWPHIRPDQLMWVCWKVLMPLALLNIVLTGIVLIL.

8 helical membrane passes run 9 to 29 (ILKV…LTYV), 79 to 99 (IAPV…PFFP), 117 to 137 (VGIL…LLAG), 162 to 182 (VSGL…LIEI), 188 to 208 (GGIF…FLIA), 243 to 263 (FFIG…LLFF), 269 to 289 (LWFI…LFLF), and 309 to 329 (WKVL…VLIL).

Belongs to the complex I subunit 1 family. As to quaternary structure, NDH-1 is composed of 14 different subunits. Subunits NuoA, H, J, K, L, M, N constitute the membrane sector of the complex.

It localises to the cell inner membrane. It catalyses the reaction a quinone + NADH + 5 H(+)(in) = a quinol + NAD(+) + 4 H(+)(out). Functionally, NDH-1 shuttles electrons from NADH, via FMN and iron-sulfur (Fe-S) centers, to quinones in the respiratory chain. The immediate electron acceptor for the enzyme in this species is believed to be ubiquinone. Couples the redox reaction to proton translocation (for every two electrons transferred, four hydrogen ions are translocated across the cytoplasmic membrane), and thus conserves the redox energy in a proton gradient. This subunit may bind ubiquinone. In Wolinella succinogenes (strain ATCC 29543 / DSM 1740 / CCUG 13145 / JCM 31913 / LMG 7466 / NCTC 11488 / FDC 602W) (Vibrio succinogenes), this protein is NADH-quinone oxidoreductase subunit H.